The chain runs to 365 residues: MEPGQPREAREPGPGAETAAVPRWEEAKTFYDNLSSKKKPKSPKPQNAVTIAVSSRALFRMDEEQRIYTEQGVEEYVRYQLEHENEPFSPGPAFPFVKALEAVNKRLRELYPDSEDIFDIVLMTNNHAQVGVRLINSINHYDLFIERFCMTGGNSPICYLKAYHTNLYLSADADKVREAIDEGIAAATIFSPSRDVVVSQSQLRVAFDGDAVLFSDESERIVKAHGLDRFFEHEKAHENKPLAQGPLKGFLEALGRLQKKFYSKGLRLECPIRTYLVTARSAASSGARALKTLRSWGLETDEALFLAGAPKGPLLEKIRPHIFFDDQMFHVAGAQEMGTVAAHVPYGVAQNPRRAAAAKQSLGAQ.

Residues 1 to 11 (MEPGQPREARE) are compositionally biased toward basic and acidic residues. Positions 1–23 (MEPGQPREAREPGPGAETAAVPR) are disordered. Catalysis depends on aspartate 208, which acts as the Nucleophile.

Belongs to the 5'-nucleotidase type 3 family. Mg(2+) is required as a cofactor.

The protein resides in the cytoplasm. It carries out the reaction a ribonucleoside 5'-phosphate + H2O = a ribonucleoside + phosphate. The enzyme catalyses a 2'-deoxyribonucleoside 5'-phosphate + H2O = a 2'-deoxyribonucleoside + phosphate. It catalyses the reaction IMP + H2O = inosine + phosphate. The catalysed reaction is AMP + H2O = adenosine + phosphate. It carries out the reaction dCMP + H2O = 2'-deoxycytidine + phosphate. Its activity is regulated as follows. Activated by ADP. Catalyzes the hydrolysis of ribonucleotide and deoxyribonucleotide monophosphates, releasing inorganic phosphate and the corresponding nucleoside. AMP is the major substrate but can also hydrolyze dCMP and IMP. This is Cytosolic 5'-nucleotidase 1A (Nt5c1a) from Mus musculus (Mouse).